The chain runs to 108 residues: LBH domain-containing protein 2 (108 aa).

Residues 1–11 (MSTPRPAPPQP) show a composition bias toward pro residues. The tract at residues 1–108 (MSTPRPAPPQ…SEDPAAPARG (108 aa)) is disordered. In terms of domain architecture, LBH spans 37 to 62 (QRLPSIVVEPSEADPVESGELRWPLE). A compositionally biased stretch (low complexity) spans 63 to 85 (SAQRGPSQSRAAAAPSPSLPGEP).

The protein is LBH domain-containing protein 2 of Homo sapiens (Human).